A 44-amino-acid chain; its full sequence is YDNVNLDEILANDRLLVPYIKCLLDEGKKAPDAKELKEHIRXAL.

It belongs to the insect A10/OS-D protein family.

The protein localises to the secreted. Functionally, has antibacterial activity against the Gram-negative bacteria E.coli and E.cloacae, but not against the Gram-negative bacteria P.aeruginosa, P.vulgaris, K.pneumoniae and S.enteritidis or the Gram-positive bacteria S.aureus, S.epidermidis and S.salivarius. In Heliothis virescens (Tobacco budworm moth), this protein is Viresin.